We begin with the raw amino-acid sequence, 224 residues long: MIKILLVEDDLGLSNSVFDFLDDFADVMQVFDGEEGLYEAESGVYDLILLDLMLPEKNGFQVLKELREKGITTPVLIMTAKESLDDKGHGFELGADDYLTKPFYLEELKMRIQALLKRSGKFNENTLTYGNIVVNLSTNTVKVEDTPVELLGKEFDLLVYFLQNQNVILPKTQIFDRLWGFDSDTTISVVEVYVSKVRKKLKGTTFAENLQTLRSVGYLLKDVQ.

One can recognise a Response regulatory domain in the interval 3–116; the sequence is KILLVEDDLG…ELKMRIQALL (114 aa). The residue at position 51 (Asp-51) is a 4-aspartylphosphate. The ompR/PhoB-type DNA-binding region spans 124 to 222; the sequence is ENTLTYGNIV…LRSVGYLLKD (99 aa).

Phosphorylated by CiaH.

The protein resides in the cytoplasm. In terms of biological role, member of the two-component regulatory system CiaH/CiaR. Involved in early steps of competence regulation and in penicillin susceptibility. The sequence is that of Transcriptional regulatory protein CiaR (ciaR) from Streptococcus pneumoniae (strain ATCC BAA-255 / R6).